The primary structure comprises 379 residues: Presenilin-associated rhomboid-like protein, mitochondrial (379 aa).

Residues 1–52 (MAWRGWAQRGWGCGQAWGASVGGRSCEELTAVLTPPQLLGRRFNFFIQQKCG) constitute a mitochondrion transit peptide. The Mitochondrial matrix portion of the chain corresponds to 53-101 (FRKAPRKVEPRRSDPGTSGEAYKRSALIPPVEETVFYPSPYPIRSLIKP). Serine 65 is subject to Phosphoserine. The residue at position 69 (threonine 69) is a Phosphothreonine. Phosphoserine is present on serine 70. The helical transmembrane segment at 102–121 (LFFTVGFTGCAFGSAAIWQY) threads the bilayer. Topologically, residues 122-167 (ESLKSRVQSYFDGIKADWLDSIRPQKEGDFRKEINKWWNNLSDGQR) are mitochondrial intermembrane. The chain crosses the membrane as a helical span at residues 168–187 (TVTGIIAANVLVFCLWRVPS). The Mitochondrial matrix segment spans residues 188–207 (LQRTMIRYFTSNPASKVLCS). A helical transmembrane segment spans residues 208–230 (PMLLSTFSHFSLFHMAANMYVLW). At 231-244 (SFSSSIVNILGQEQ) the chain is on the mitochondrial intermembrane side. The helical transmembrane segment at 245 to 262 (FMAVYLSAGVISNFVSYV) threads the bilayer. Topologically, residues 263–272 (GKVATGRYGP) are mitochondrial matrix. A helical transmembrane segment spans residues 273 to 289 (SLGASGAIMTVLAAVCT). Catalysis depends on serine 277, which acts as the Nucleophile. Over 290–295 (KIPEGR) the chain is Mitochondrial intermembrane. The helical transmembrane segment at 296–318 (LAIIFLPMFTFTAGNALKAIIAM) threads the bilayer. Residues 319–332 (DTAGMILGWKFFDH) lie on the Mitochondrial matrix side of the membrane. Residues 333-354 (AAHLGGALFGIWYVTYGHELIW) form a helical membrane-spanning segment. Histidine 335 is an active-site residue. Residues 355–379 (KNREPLVKIWHEIRTNGPKKGGGSK) are Mitochondrial intermembrane-facing.

This sequence belongs to the peptidase S54 family. Interacts with PSEN1 and PSEN2. Binds OPA1. P-beta is proteolytically processed (beta-cleavage) in a PARL-dependent manner. The cleavage is inhibited when residues Ser-65, Thr-69 and Ser-70 are all phosphorylated.

It is found in the mitochondrion inner membrane. It localises to the nucleus. The enzyme catalyses Cleaves type-1 transmembrane domains using a catalytic dyad composed of serine and histidine that are contributed by different transmembrane domains.. Its function is as follows. Required for the control of apoptosis during postnatal growth. Essential for proteolytic processing of an antiapoptotic form of OPA1 which prevents the release of mitochondrial cytochrome c in response to intrinsic apoptotic signals. Required for the maturation of PINK1 into its 52kDa mature form after its cleavage by mitochondrial-processing peptidase (MPP). Promotes cleavage of serine/threonine-protein phosphatase PGAM5 in damaged mitochondria in response to loss of mitochondrial membrane potential. Mediates differential cleavage of PINK1 and PGAM5 depending on the health status of mitochondria, disassociating from PINK1 and associating with PGAM5 in response to mitochondrial membrane potential loss. Required for processing of CLPB into a form with higher protein disaggregase activity by removing an autoinhibitory N-terminal peptide. Promotes processing of DIABLO/SMAC in the mitochondrion which is required for DIABLO apoptotic activity. Also required for cleavage of STARD7 and TTC19. Promotes changes in mitochondria morphology regulated by phosphorylation of P-beta domain. This Homo sapiens (Human) protein is Presenilin-associated rhomboid-like protein, mitochondrial (PARL).